We begin with the raw amino-acid sequence, 64 residues long: DNA gyrase inhibitor YacG (64 aa).

The Zn(2+) site is built by cysteine 7, cysteine 10, cysteine 26, and cysteine 30. A disordered region spans residues 44–64 (SIPGEPVVIANDDYNNEESDY).

This sequence belongs to the DNA gyrase inhibitor YacG family. In terms of assembly, interacts with GyrB. The cofactor is Zn(2+).

Its function is as follows. Inhibits all the catalytic activities of DNA gyrase by preventing its interaction with DNA. Acts by binding directly to the C-terminal domain of GyrB, which probably disrupts DNA binding by the gyrase. The polypeptide is DNA gyrase inhibitor YacG (Idiomarina loihiensis (strain ATCC BAA-735 / DSM 15497 / L2-TR)).